Consider the following 1081-residue polypeptide: Carbamoyl phosphate synthase large chain (1081 aa).

Residues 1-403 are carboxyphosphate synthetic domain; that stretch reads MPRRNDLNKI…SFQKALRSLE (403 aa). R129, R170, G177, K209, L211, E216, G242, V243, H244, Q286, and E300 together coordinate ATP. The 197-residue stretch at 133-329 folds into the ATP-grasp 1 domain; sequence KEAMARIGVP…IAKFAAKLAV (197 aa). Residues Q286, E300, and N302 each coordinate Mg(2+). Residues Q286, E300, and N302 each coordinate Mn(2+). The interval 404–553 is oligomerization domain; sequence TGRFGFGCDR…STYEPEECEV (150 aa). Residues 554–944 are carbamoyl phosphate synthetic domain; sequence LPSDKPKVMI…AFAKAELGAG (391 aa). In terms of domain architecture, ATP-grasp 2 spans 686–878; it reads EKILHELEIS…LAKIASLVMS (193 aa). ATP contacts are provided by R722, K761, L763, E768, G794, I795, H796, S797, Q837, and E849. Mg(2+)-binding residues include Q837, E849, and N851. Residues Q837, E849, and N851 each contribute to the Mn(2+) site. Residues 945–1081 enclose the MGS-like domain; it reads VILATTGTVF…DVKALQDYLG (137 aa). Positions 945–1081 are allosteric domain; it reads VILATTGTVF…DVKALQDYLG (137 aa).

It belongs to the CarB family. As to quaternary structure, composed of two chains; the small (or glutamine) chain promotes the hydrolysis of glutamine to ammonia, which is used by the large (or ammonia) chain to synthesize carbamoyl phosphate. Tetramer of heterodimers (alpha,beta)4. Mg(2+) serves as cofactor. It depends on Mn(2+) as a cofactor.

The catalysed reaction is hydrogencarbonate + L-glutamine + 2 ATP + H2O = carbamoyl phosphate + L-glutamate + 2 ADP + phosphate + 2 H(+). It carries out the reaction hydrogencarbonate + NH4(+) + 2 ATP = carbamoyl phosphate + 2 ADP + phosphate + 2 H(+). Its pathway is amino-acid biosynthesis; L-arginine biosynthesis; carbamoyl phosphate from bicarbonate: step 1/1. It functions in the pathway pyrimidine metabolism; UMP biosynthesis via de novo pathway; (S)-dihydroorotate from bicarbonate: step 1/3. In terms of biological role, large subunit of the glutamine-dependent carbamoyl phosphate synthetase (CPSase). CPSase catalyzes the formation of carbamoyl phosphate from the ammonia moiety of glutamine, carbonate, and phosphate donated by ATP, constituting the first step of 2 biosynthetic pathways, one leading to arginine and/or urea and the other to pyrimidine nucleotides. The large subunit (synthetase) binds the substrates ammonia (free or transferred from glutamine from the small subunit), hydrogencarbonate and ATP and carries out an ATP-coupled ligase reaction, activating hydrogencarbonate by forming carboxy phosphate which reacts with ammonia to form carbamoyl phosphate. In Synechocystis sp. (strain ATCC 27184 / PCC 6803 / Kazusa), this protein is Carbamoyl phosphate synthase large chain.